A 154-amino-acid chain; its full sequence is NADPH-dependent 7-cyano-7-deazaguanine reductase (154 aa).

Cys52 (thioimide intermediate) is an active-site residue. Asp59 (proton donor) is an active-site residue. Residues Val74 to Ser76 and His93 to Glu94 each bind substrate.

Belongs to the GTP cyclohydrolase I family. QueF type 1 subfamily.

The protein resides in the cytoplasm. It carries out the reaction 7-aminomethyl-7-carbaguanine + 2 NADP(+) = 7-cyano-7-deazaguanine + 2 NADPH + 3 H(+). Its pathway is tRNA modification; tRNA-queuosine biosynthesis. In terms of biological role, catalyzes the NADPH-dependent reduction of 7-cyano-7-deazaguanine (preQ0) to 7-aminomethyl-7-deazaguanine (preQ1). This chain is NADPH-dependent 7-cyano-7-deazaguanine reductase, found in Ruegeria sp. (strain TM1040) (Silicibacter sp.).